Consider the following 442-residue polypeptide: D(2) dopamine receptor A (442 aa).

Topologically, residues 1–31 (MDPQNLSMYNDDINNGTNGTAVDQKPHYNYY) are extracellular. 3 N-linked (GlcNAc...) asparagine glycosylation sites follow: N5, N15, and N18. The helical transmembrane segment at 32–54 (AMLLTLLVFVIVFGNVLVCIAVS) threads the bilayer. Residues 55–64 (REKALQTTTN) are Cytoplasmic-facing. A helical membrane pass occupies residues 65-87 (YLIVSLAVADLLVATLVMPWAVY). At 88–102 (MEVVGEWRFSRIHCD) the chain is on the extracellular side. Residues C101 and C176 are joined by a disulfide bond. A helical transmembrane segment spans residues 103–124 (IFVTLDVMMCTASILNLCAISI). The Cytoplasmic portion of the chain corresponds to 125–145 (DRYTAVAMPMLYNTRYSSKRR). Residues 146–166 (VTVMISVVWVLSFAISCPLLF) traverse the membrane as a helical segment. Residues 167-182 (GLNNTGSKVCIIDNPA) are Extracellular-facing. The chain crosses the membrane as a helical span at residues 183–207 (FVIYSSIVSFYVPFIVTLLVYVQIY). At 208–372 (IVLRKRRKRV…SQHKEKKATQ (165 aa)) the chain is on the cytoplasmic side. The interval 273-335 (DMEMEMMSST…KNGHPKDSTK (63 aa)) is disordered. A compositionally biased stretch (polar residues) spans 304–318 (ATSNQCKNASLTSPV). A compositionally biased stretch (basic and acidic residues) spans 322 to 335 (YKAEKNGHPKDSTK). A helical transmembrane segment spans residues 373 to 394 (MLAIVLGVFIICWLPFFIIHIL). The Extracellular segment spans residues 395–408 (NMHCNCNIPQALYS). A disulfide bridge connects residues C398 and C400. Residues 409 to 430 (AFTWLGYVNSAVNPIIYTTFNV) traverse the membrane as a helical segment. Residues 431-442 (EFRKAFIKILHC) are Cytoplasmic-facing. A lipid anchor (S-palmitoyl cysteine) is attached at C442.

Belongs to the G-protein coupled receptor 1 family. Palmitoylated. Palmitoylation is probably required for proper localization to the plasma membrane and stability of the receptor. In terms of tissue distribution, brain; pituitary.

It is found in the cell membrane. The protein resides in the golgi apparatus membrane. Functionally, this is one of the five types (D1 to D5) of receptors for dopamine. The activity of this receptor is mediated by G proteins which inhibits adenylyl cyclase. In Xenopus D2R is involved in the regulation of the melanotrope cells of the intermediate pituitary during background adaptation of the animal. In Xenopus laevis (African clawed frog), this protein is D(2) dopamine receptor A (drd2-a).